The sequence spans 813 residues: Ankyrin repeat domain-containing protein SOWAHB (813 aa).

Disordered stretches follow at residues 142-256 and 400-436; these read SAAP…QSLS and ETCGSEESDSGEGGDCDTEPRDNDDADDDTFSSDSHK. Positions 158–176 are enriched in basic and acidic residues; it reads MSEKARVNPSHWDTKRYYP. Residues 177–189 are compositionally biased toward pro residues; sequence EDPPVPDSLPVSP. Positions 191–202 are enriched in polar residues; it reads CTNTRQSSFTST. A compositionally biased stretch (low complexity) spans 208-244; the sequence is HSLSSNNLSSSFSSPESPGLVAKPYNASPSPAGSSPN. A compositionally biased stretch (polar residues) spans 245-256; that stretch reads IREQTPKSQSLS. Over residues 400 to 416 the composition is skewed to acidic residues; the sequence is ETCGSEESDSGEGGDCD. 2 ANK repeats span residues 657-686 and 696-726; these read TGYTALHWFAKHGCIDLFNKVVIGAKKAGI and NGYTPLHIAAIHGHHKVAIMLVEKLKVNVKV.

The protein belongs to the SOWAH family.

This Xenopus laevis (African clawed frog) protein is Ankyrin repeat domain-containing protein SOWAHB (sowahb).